The sequence spans 137 residues: Global transcriptional regulator Spx (137 aa).

A disulfide bridge links cysteine 10 with cysteine 13.

The protein belongs to the ArsC family. Spx subfamily. In terms of assembly, interacts with the C-terminal domain of the alpha subunit of the RNAP.

Its subcellular location is the cytoplasm. Global transcriptional regulator that plays a key role in stress response and exerts either positive or negative regulation of genes. Acts by interacting with the C-terminal domain of the alpha subunit of the RNA polymerase (RNAP). This interaction can enhance binding of RNAP to the promoter region of target genes and stimulate their transcription, or block interaction of RNAP with activator. The chain is Global transcriptional regulator Spx from Streptococcus agalactiae serotype III (strain NEM316).